The sequence spans 662 residues: DNA ligase (662 aa).

Residues 31 to 35 (DYEYD), 80 to 81 (SL), and Glu-109 contribute to the NAD(+) site. Residue Lys-111 is the N6-AMP-lysine intermediate of the active site. The NAD(+) site is built by Arg-132, Glu-166, Lys-282, and Lys-306. Zn(2+) contacts are provided by Cys-400, Cys-403, Cys-418, and Cys-423. One can recognise a BRCT domain in the interval 581–662 (KVSNIFEGKT…FEEMLKGENI (82 aa)).

The protein belongs to the NAD-dependent DNA ligase family. LigA subfamily. The cofactor is Mg(2+). Mn(2+) serves as cofactor.

It catalyses the reaction NAD(+) + (deoxyribonucleotide)n-3'-hydroxyl + 5'-phospho-(deoxyribonucleotide)m = (deoxyribonucleotide)n+m + AMP + beta-nicotinamide D-nucleotide.. Its function is as follows. DNA ligase that catalyzes the formation of phosphodiester linkages between 5'-phosphoryl and 3'-hydroxyl groups in double-stranded DNA using NAD as a coenzyme and as the energy source for the reaction. It is essential for DNA replication and repair of damaged DNA. The sequence is that of DNA ligase from Thermoanaerobacter sp. (strain X514).